Here is a 90-residue protein sequence, read N- to C-terminus: Iron oxidase (90 aa).

Residues 1–37 constitute a signal peptide (tat-type signal); it reads MSEKDKMITRRDALRNIAVVVGSVATTTMMGVGVADA. Residues C57, C60, C69, and C82 each coordinate [4Fe-4S] cluster.

The protein belongs to the high-potential iron-sulfur protein (HiPIP) family. In terms of assembly, homomultimer. In terms of processing, predicted to be exported by the Tat system. The position of the signal peptide cleavage has been experimentally proven.

The protein localises to the periplasm. Functionally, catalyzes the oxidation of Fe(2+) to Fe(3+) coupled to cytochrome c552 reduction. The polypeptide is Iron oxidase (iro) (Acidithiobacillus ferrooxidans (Thiobacillus ferrooxidans)).